Here is a 264-residue protein sequence, read N- to C-terminus: Thiazole synthase (264 aa).

Lys-106 functions as the Schiff-base intermediate with DXP in the catalytic mechanism. Residues Gly-167, 193-194 (AG), and 215-216 (NS) each bind 1-deoxy-D-xylulose 5-phosphate.

This sequence belongs to the ThiG family. In terms of assembly, homotetramer. Forms heterodimers with either ThiH or ThiS.

The protein resides in the cytoplasm. The enzyme catalyses [ThiS sulfur-carrier protein]-C-terminal-Gly-aminoethanethioate + 2-iminoacetate + 1-deoxy-D-xylulose 5-phosphate = [ThiS sulfur-carrier protein]-C-terminal Gly-Gly + 2-[(2R,5Z)-2-carboxy-4-methylthiazol-5(2H)-ylidene]ethyl phosphate + 2 H2O + H(+). Its pathway is cofactor biosynthesis; thiamine diphosphate biosynthesis. Catalyzes the rearrangement of 1-deoxy-D-xylulose 5-phosphate (DXP) to produce the thiazole phosphate moiety of thiamine. Sulfur is provided by the thiocarboxylate moiety of the carrier protein ThiS. In vitro, sulfur can be provided by H(2)S. The sequence is that of Thiazole synthase from Azotobacter vinelandii (strain DJ / ATCC BAA-1303).